The chain runs to 388 residues: Gastricsin (388 aa).

An N-terminal signal peptide occupies residues M1–A16. The propeptide at T17–L59 is activation peptide. One can recognise a Peptidase A1 domain in the interval Y73–A385. D91 is a catalytic residue. 2 cysteine pairs are disulfide-bonded: C104-C109 and C267-C271. Residue D276 is part of the active site. A disulfide bridge connects residues C310 and C343.

Belongs to the peptidase A1 family.

It localises to the secreted. It carries out the reaction More restricted specificity than pepsin A, but shows preferential cleavage at Tyr-|-Xaa bonds. High activity on hemoglobin.. Inhibited by pepstatin. Functionally, hydrolyzes a variety of proteins. The sequence is that of Gastricsin (PGC) from Callithrix jacchus (White-tufted-ear marmoset).